The following is a 339-amino-acid chain: Undecaprenyl-phosphate 4-deoxy-4-formamido-L-arabinose transferase (339 aa).

2 consecutive transmembrane segments (helical) span residues 235–255 and 269–289; these read LSLV…FLLV and LFVL…GMGL.

The protein belongs to the glycosyltransferase 2 family.

It is found in the cell inner membrane. It carries out the reaction UDP-4-deoxy-4-formamido-beta-L-arabinose + di-trans,octa-cis-undecaprenyl phosphate = 4-deoxy-4-formamido-alpha-L-arabinopyranosyl di-trans,octa-cis-undecaprenyl phosphate + UDP. Its pathway is glycolipid biosynthesis; 4-amino-4-deoxy-alpha-L-arabinose undecaprenyl phosphate biosynthesis; 4-amino-4-deoxy-alpha-L-arabinose undecaprenyl phosphate from UDP-4-deoxy-4-formamido-beta-L-arabinose and undecaprenyl phosphate: step 1/2. It participates in bacterial outer membrane biogenesis; lipopolysaccharide biosynthesis. Functionally, catalyzes the transfer of 4-deoxy-4-formamido-L-arabinose from UDP to undecaprenyl phosphate. The modified arabinose is attached to lipid A and is required for resistance to polymyxin and cationic antimicrobial peptides. In Pseudomonas paraeruginosa (strain DSM 24068 / PA7) (Pseudomonas aeruginosa (strain PA7)), this protein is Undecaprenyl-phosphate 4-deoxy-4-formamido-L-arabinose transferase.